We begin with the raw amino-acid sequence, 436 residues long: MEETGVKDVRDLCEKFLDFKREKERLEELLKEYFKRLEELERKLRAHEEKLRIEARRRKTLEKELEMERDEKAELREELRRKEVMIEKLRSDLQRMKKPPLIVGTVEEILDDGRVIVKSSTGPKFVSNVSPTVDRNELEPGANVALNQQSMAVVDVLPSEKDSRVLAMEVDESPDVSYDDIGGLDEQIREIREVVEKPLKEPELFEKVGVEPPKGVLLYGPPGTGKTLLAKAVANHADATFIRLAAPELVQKFIGEGARLVRELFELAREKAPSIIFIDEIDAIGARRMRDATSGDREVQRTLTQLLAEMDGFDPLDDIKVIAATNRKDILDPALLRPGRFDRHIKIPLPDEEGRYEIFKIHTRDMNLAEDVDLQKLAKITEGASGADIKAICTEAGMMAIREDRDIVTMDDFLKAVDRVMGKKEEESGEFKRAYH.

A coiled-coil region spans residues lysine 7–lysine 98. ATP is bound by residues glycine 223–leucine 228 and histidine 362. Residues alanine 434–histidine 436 form a docks into pockets in the proteasome alpha-ring to cause gate opening region.

Belongs to the AAA ATPase family. Homohexamer. The hexameric complex has a two-ring architecture resembling a top hat that caps the 20S proteasome core at one or both ends. Upon ATP-binding, the C-terminus of PAN interacts with the alpha-rings of the proteasome core by binding to the intersubunit pockets.

It is found in the cytoplasm. Its function is as follows. ATPase which is responsible for recognizing, binding, unfolding and translocation of substrate proteins into the archaeal 20S proteasome core particle. Is essential for opening the gate of the 20S proteasome via an interaction with its C-terminus, thereby allowing substrate entry and access to the site of proteolysis. Thus, the C-termini of the proteasomal ATPase function like a 'key in a lock' to induce gate opening and therefore regulate proteolysis. Unfolding activity requires energy from ATP hydrolysis, whereas ATP binding alone promotes ATPase-20S proteasome association which triggers gate opening, and supports translocation of unfolded substrates. The polypeptide is Proteasome-activating nucleotidase (Methanopyrus kandleri (strain AV19 / DSM 6324 / JCM 9639 / NBRC 100938)).